We begin with the raw amino-acid sequence, 285 residues long: Release factor glutamine methyltransferase (285 aa).

S-adenosyl-L-methionine-binding positions include 119 to 123, Glu-142, Trp-175, and Asn-191; that span reads GTGSG. Residue 191–194 participates in substrate binding; the sequence is NPPY.

This sequence belongs to the protein N5-glutamine methyltransferase family. PrmC subfamily.

The catalysed reaction is L-glutaminyl-[peptide chain release factor] + S-adenosyl-L-methionine = N(5)-methyl-L-glutaminyl-[peptide chain release factor] + S-adenosyl-L-homocysteine + H(+). Methylates the class 1 translation termination release factors RF1/PrfA and RF2/PrfB on the glutamine residue of the universally conserved GGQ motif. In Burkholderia pseudomallei (strain K96243), this protein is Release factor glutamine methyltransferase.